Reading from the N-terminus, the 375-residue chain is G-protein coupled estrogen receptor 1 (375 aa).

The residue at position 1 (Met-1) is an N-acetylmethionine. Residues 1-62 (MDATTPAQTV…QQYVIALFLS (62 aa)) lie on the Extracellular side of the membrane. N-linked (GlcNAc...) asparagine glycosylation is found at Asn-32 and Asn-44. A helical membrane pass occupies residues 63-84 (CLYTIFLFPIGFVGNILILVVN). Over 85–96 (ISFREKMTIPDL) the chain is Cytoplasmic. The chain crosses the membrane as a helical span at residues 97–120 (YFINLAAADLILVADSLIEVFNLD). At 121-132 (EQYYDIAVLCTF) the chain is on the extracellular side. Cys-130 and Cys-207 are joined by a disulfide. A helical membrane pass occupies residues 133-153 (MSLFLQINMYSSVFFLTWMSF). Residues 154 to 175 (DRYLALAKAMRCGLFRTKHHAR) are Cytoplasmic-facing. The helical transmembrane segment at 176–194 (LSCGLIWMASVSATLVPFT) threads the bilayer. The Extracellular portion of the chain corresponds to 195-220 (AVHLRHTEEACFCFADVREVQWLEVT). A helical transmembrane segment spans residues 221–236 (LGFIMPFAIIGLCYSL). The Cytoplasmic portion of the chain corresponds to 237–259 (IVRALIRAHRHRGLRPRRQKALR). The helical transmembrane segment at 260-280 (MIFAVVLVFFICWLPENVFIS) threads the bilayer. The Extracellular portion of the chain corresponds to 281–306 (VHLLQWTQPGDTPCKQSFRHAYPLTG). Residues 307-327 (HIVNLAAFSNSCLNPLIYSFL) traverse the membrane as a helical segment. The Cytoplasmic segment spans residues 328 to 375 (GETFRDKLRLYVEQKTSLPALNRFCHATLKAVIPDSTEQSEVRFSSAV).

Belongs to the G-protein coupled receptor 1 family. As to quaternary structure, interacts with RAMP3; the interaction confers proper subcellular localization and function in cardioprotection. Interacts with KRT7 and KRT8. Interacts with EGFR; the interaction increases after agonist-induced stimulation in cancer-associated fibroblasts (CAF). Interacts with EGFR and ESR1. Interacts (via C-terminus tail motif) with DLG4 (via N-terminus tandem pair of PDZ domains); the interaction is direct and induces the increase of GPER1 protein levels residing at the plasma membrane surface in a estradiol-independent manner. Homodimer. Heterodimer; heterodimerizes with other G-protein-coupled receptor (GPCRs) like CRHR1, HTR1A and PAQR8. Post-translationally, ubiquitinated; ubiquitination occurs at the plasma membrane and leads to proteasome-mediated degradation. N-glycosylated. In terms of tissue distribution, expressed in brain, heart, spleen, preadipocytes, mature adipocytes and primary hippocampal neurons. Expressed in neurons of the hippocampus, hypothalamic paraventricular nucleus (PVH), supraoptic nucleus (SON) and the median eminence. Expressed in the nucleus ambiguous (at protein level). Expressed in brain, pituitary gland, adrenal medulla, renal pelvis, ovary, endothelial cells, visceral fat tissues and islets of Langerhans.

The protein resides in the nucleus. It localises to the cytoplasm. It is found in the perinuclear region. Its subcellular location is the cytoskeleton. The protein localises to the cell membrane. The protein resides in the endoplasmic reticulum membrane. It localises to the golgi apparatus membrane. It is found in the cell projection. Its subcellular location is the dendrite. The protein localises to the cytoplasmic vesicle membrane. The protein resides in the early endosome. It localises to the recycling endosome. It is found in the golgi apparatus. Its subcellular location is the trans-Golgi network. The protein localises to the dendritic spine membrane. The protein resides in the axon. It localises to the postsynaptic density. It is found in the mitochondrion membrane. Functionally, G-protein coupled estrogen receptor that binds to 17-beta-estradiol (E2) with high affinity, leading to rapid and transient activation of numerous intracellular signaling pathways. Stimulates cAMP production, calcium mobilization and tyrosine kinase Src inducing the release of heparin-bound epidermal growth factor (HB-EGF) and subsequent transactivation of the epidermal growth factor receptor (EGFR), activating downstream signaling pathways such as PI3K/Akt and ERK/MAPK. Mediates pleiotropic functions among others in the cardiovascular, endocrine, reproductive, immune and central nervous systems. Has a role in cardioprotection by reducing cardiac hypertrophy and perivascular fibrosis in a RAMP3-dependent manner. Regulates arterial blood pressure by stimulating vasodilation and reducing vascular smooth muscle and microvascular endothelial cell proliferation. Plays a role in blood glucose homeostasis contributing to the insulin secretion response by pancreatic beta cells. Triggers mitochondrial apoptosis during pachytene spermatocyte differentiation. Stimulates uterine epithelial cell proliferation. Enhances uterine contractility in response to oxytocin. Contributes to thymic atrophy by inducing apoptosis. Attenuates TNF-mediated endothelial expression of leukocyte adhesion molecules. Promotes neuritogenesis in developing hippocampal neurons. Plays a role in acute neuroprotection against NMDA-induced excitotoxic neuronal death. Increases firing activity and intracellular calcium oscillations in luteinizing hormone-releasing hormone (LHRH) neurons. Inhibits early osteoblast proliferation at growth plate during skeletal development. Inhibits mature adipocyte differentiation and lipid accumulation. Involved in the recruitment of beta-arrestin 2 ARRB2 at the plasma membrane in epithelial cells. Also functions as a receptor for aldosterone mediating rapid regulation of vascular contractibility through the PI3K/ERK signaling pathway. Involved in cancer progression regulation. Stimulates cancer-associated fibroblast (CAF) proliferation by a rapid genomic response through the EGFR/ERK transduction pathway. Associated with EGFR, may act as a transcription factor activating growth regulatory genes (c-fos, cyclin D1). Promotes integrin alpha-5/beta-1 and fibronectin (FN) matrix assembly in breast cancer cells. The polypeptide is G-protein coupled estrogen receptor 1 (Gper1) (Mus musculus (Mouse)).